The following is a 248-amino-acid chain: Tyrosine recombinase XerD-like (248 aa).

The Core-binding (CB) domain maps to 1 to 72; sequence MKSYIEPFIA…TANQFLYYLY (72 aa). One can recognise a Tyr recombinase domain in the interval 85 to 248; sequence DTMKVMRTEK…PVTLEKYYKS (164 aa). Residues Lys-149 and Arg-213 contribute to the active site. Catalysis depends on Tyr-245, which acts as the O-(3'-phospho-DNA)-tyrosine intermediate.

Belongs to the 'phage' integrase family. XerD-like subfamily.

It is found in the cytoplasm. Its function is as follows. Putative tyrosine recombinase. Not involved in the cutting and rejoining of the recombining DNA molecules on dif(SL) site. The polypeptide is Tyrosine recombinase XerD-like (Streptococcus pyogenes serotype M28 (strain MGAS6180)).